The sequence spans 409 residues: Probable sodium/metabolite cotransporter BASS6, chloroplastic (409 aa).

A chloroplast-targeting transit peptide spans 1–49 (MSVITTPIETLHLKSTLRLLPRAVYRSQRIQVFPPNIFSNTSLSSPLRI). A run of 9 helical transmembrane segments spans residues 100–120 (ILPH…PSFT), 121–141 (WFTS…VGIN), 170–190 (VLGF…TPIG), 191–211 (AGIM…ATFL), 221–241 (IVMT…LSLL), 253–273 (GMIS…LLLN), 285–305 (PFLP…PLAL), 316–336 (ATIL…GYFL), and 381–401 (IPPA…VLIW).

Belongs to the bile acid:sodium symporter (BASS) (TC 2.A.28) family.

Its subcellular location is the membrane. The protein localises to the plastid. It localises to the chloroplast envelope. In terms of biological role, may function as sodium-coupled metabolite transporter across the chloroplast envelope. This chain is Probable sodium/metabolite cotransporter BASS6, chloroplastic (BASS6), found in Arabidopsis thaliana (Mouse-ear cress).